The chain runs to 217 residues: Phosphatidylinositol phosphate synthase (217 aa).

2 helical membrane passes run 28–49 and 55–74; these read LTPDVVTILGTTASVAGALTLF and FAGACVVWFFVLFDMLDGAM. Residue 31–34 participates in a CDP-1,2-diacyl-sn-glycerol binding; sequence DVVT. Asp68 and Asp71 together coordinate Mg(2+). Gly72, Arg76, and Thr82 together coordinate a CDP-1,2-diacyl-sn-glycerol. 2 residues coordinate Mg(2+): Asp89 and Asp93. Asp93 functions as the Proton acceptor in the catalytic mechanism. A run of 4 helical transmembrane segments spans residues 95 to 112, 118 to 136, 156 to 173, and 179 to 200; these read ISDGAVFCGLLWWIAFHM, VIATLICLVTSQVISYIKA, LIIVLTGAGVSDFPFVPW, and VGMWLLAVASVITCVQRLHTVW.

Belongs to the CDP-alcohol phosphatidyltransferase class-I family. In terms of assembly, homodimer. It depends on Mg(2+) as a cofactor.

The protein localises to the cell membrane. It catalyses the reaction a CDP-1,2-diacyl-sn-glycerol + 1D-myo-inositol 3-phosphate = a 1,2-diacyl-sn-glycero-3-phospho-(1D-myo-inositol-3-phosphate) + CMP + H(+). The enzyme catalyses 1,2-di-(9Z-octadecenoyl)-sn-glycero-3-cytidine-5'-diphosphate + 1D-myo-inositol 3-phosphate = 1,2-di-(9Z-octadecenoyl)-sn-glycero-3-phospho-(1D-myo-inositol-3-phosphate) + CMP + H(+). It participates in phospholipid metabolism; phosphatidylinositol phosphate biosynthesis. With respect to regulation, competitively inhibited by several inositol 1-phosphate analogs, including the phosphonate analog 1-deoxy-1-phosphonomethyl-myo-inositol (Ino-C-P). Catalyzes the conjugation of the 1'-hydroxyl group of D-myo-inositol-3-phosphate (also named L-myo-inositol-1-phosphate) with a lipid tail of cytidine diphosphate diacylglycerol (CDP-DAG), forming phosphatidylinositol phosphate (PIP) and CMP. PIP is a precursor of phosphatidylinositol (PI) which is an essential lipid for mycobacteria required for formation of their cell wall. The sequence is that of Phosphatidylinositol phosphate synthase from Mycobacterium bovis (strain BCG / Pasteur 1173P2).